The chain runs to 184 residues: Alpha-tubulin N-acetyltransferase (184 aa).

The region spanning 1-174 (MNIPPEKMHN…NNFVIFAEYF (174 aa)) is the N-acetyltransferase domain. Acetyl-CoA-binding positions include 108 to 121 (FYIQRNFRKRGLGL) and 144 to 153 (SYKLQSFLKK).

Belongs to the acetyltransferase ATAT1 family.

The catalysed reaction is L-lysyl-[alpha-tubulin] + acetyl-CoA = N(6)-acetyl-L-lysyl-[alpha-tubulin] + CoA + H(+). Its function is as follows. Specifically acetylates 'Lys-40' in alpha-tubulin on the lumenal side of microtubules. Promotes microtubule destabilization and accelerates microtubule dynamics; this activity may be independent of acetylation activity. Acetylates alpha-tubulin with a slow enzymatic rate, due to a catalytic site that is not optimized for acetyl transfer. Enters the microtubule through each end and diffuses quickly throughout the lumen of microtubules. Acetylates only long/old microtubules because of its slow acetylation rate since it does not have time to act on dynamically unstable microtubules before the enzyme is released. The polypeptide is Alpha-tubulin N-acetyltransferase (Plasmodium knowlesi (strain H)).